Consider the following 504-residue polypeptide: Kinesin light chain 3 (504 aa).

A coiled-coil region spans residues 90 to 150; it reads ALSAHVGALE…EEEKRHLEFL (61 aa). The interval 153 to 197 is disordered; it reads LRQYDPPAESQQSESPPRRDSLASLFPSEEEERKGPEAAGAAAAQ. A compositionally biased stretch (low complexity) spans 158–167; it reads PPAESQQSES. Residue Ser173 is modified to Phosphoserine. TPR repeat units lie at residues 207-240, 249-282, 291-324, 333-366, and 375-408; these read LRTLHNLVIQYAGQGRYEVAVPLCRQALEDLERS, ATMLNILALVYRDQNKYKEATDLLHDALQIREQT, AATLNNLAVLYGKRGRYREAEPLCQRALEIREKV, AKQLNNLALLCQNQGKFEDVERHYARALSIYEAL, and AKTKNNLASAYLKQNKYQQAEELYKEILHKEDLP. The disordered stretch occupies residues 411–438; it reads LGAPNTGTAGDAEQALRRSSSLSKIRES. Position 466 is a phosphoserine (Ser466). Residues 472–504 are disordered; that stretch reads VDAPRAPGTQFPSWHLDKAPRTLSASTQDLSPH. The segment covering 494–504 has biased composition (polar residues); the sequence is LSASTQDLSPH. Thr498 carries the post-translational modification Phosphothreonine. Ser502 bears the Phosphoserine mark.

This sequence belongs to the kinesin light chain family. As to quaternary structure, oligomer composed of two heavy chains and two light chains. Associates with microtubulin in an ATP-dependent manner. Interacts with KIF5C. Interacts with ODF1. Interacts with LRGUK. Interacts with VDAC2.

Its subcellular location is the cytoplasm. The protein resides in the cytoskeleton. The protein localises to the mitochondrion. Kinesin is a microtubule-associated force-producing protein that may play a role in organelle transport. Plays a role during spermiogenesis in the development of the sperm tail midpiece and in the normal function of spermatozoa. May play a role in the formation of the mitochondrial sheath formation in the developing spermatid midpiece. The polypeptide is Kinesin light chain 3 (KLC3) (Homo sapiens (Human)).